Reading from the N-terminus, the 182-residue chain is Isopentenyl-diphosphate Delta-isomerase (182 aa).

2 residues coordinate Mn(2+): His-25 and His-32. Residues 30 to 164 (LLHLAFSSWL…PWAFSPWMVM (135 aa)) form the Nudix hydrolase domain. The active site involves Cys-67. Mn(2+) is bound at residue His-69. Mg(2+) is bound at residue Glu-87. Glu-114 and Glu-116 together coordinate Mn(2+). Residue Glu-116 is part of the active site.

Belongs to the IPP isomerase type 1 family. Homodimer. Mg(2+) is required as a cofactor. It depends on Mn(2+) as a cofactor.

The protein localises to the cytoplasm. It catalyses the reaction isopentenyl diphosphate = dimethylallyl diphosphate. The protein operates within isoprenoid biosynthesis; dimethylallyl diphosphate biosynthesis; dimethylallyl diphosphate from isopentenyl diphosphate: step 1/1. In terms of biological role, catalyzes the 1,3-allylic rearrangement of the homoallylic substrate isopentenyl (IPP) to its highly electrophilic allylic isomer, dimethylallyl diphosphate (DMAPP). The polypeptide is Isopentenyl-diphosphate Delta-isomerase (Shigella flexneri serotype 5b (strain 8401)).